The primary structure comprises 157 residues: Phospholipase A2 phaiodactylipin (157 aa).

Ca(2+) contacts are provided by Trp-34 and Gly-36. 5 disulfide bridges follow: Cys-35/Cys-56, Cys-55/Cys-94, Cys-62/Cys-87, Cys-85/Cys-127, and Cys-132/Cys-143. Asn-43 is a glycosylation site (N-linked (GlcNAc...) asparagine). His-59 is an active-site residue. Asp-60 is a binding site for Ca(2+). Residue Asp-88 is part of the active site. Residue Asn-101 is glycosylated (N-linked (GlcNAc...) asparagine). The propeptide at 134-139 is removed in mature form; it reads DEKSAR. Residue Asn-153 is glycosylated (N-linked (GlcNAc...) asparagine).

It belongs to the phospholipase A2 family. Group III subfamily. As to quaternary structure, heterodimer composed of a small subunit and a large subunit; disulfide-linked. The cofactor is Ca(2+). Expressed by the venom gland.

Its subcellular location is the secreted. It carries out the reaction a 1,2-diacyl-sn-glycero-3-phosphocholine + H2O = a 1-acyl-sn-glycero-3-phosphocholine + a fatty acid + H(+). In terms of biological role, scorpion venom phospholipase A2 (PLA2) that is lethal to crickets and crustaceae. Causes inflammation in mice and lysis of human erythrocytes. Has a mild anticoagulant effect on human platelets. PLA2 catalyzes the calcium-dependent hydrolysis of the 2-acyl groups in 3-sn-phosphoglycerides. In Anuroctonus phaiodactylus (Mafia scorpion), this protein is Phospholipase A2 phaiodactylipin.